Consider the following 219-residue polypeptide: Small ribosomal subunit protein eS1 (219 aa).

It belongs to the eukaryotic ribosomal protein eS1 family. Component of the small ribosomal subunit. Mature ribosomes consist of a small (40S) and a large (60S) subunit. The 40S subunit contains about 33 different proteins and 1 molecule of RNA (18S). The 60S subunit contains about 49 different proteins and 3 molecules of RNA (25S, 5.8S and 5S).

It localises to the cytoplasm. The chain is Small ribosomal subunit protein eS1 from Guillardia theta (Cryptophyte).